The following is a 213-amino-acid chain: Glycerol-3-phosphate acyltransferase (213 aa).

Transmembrane regions (helical) follow at residues isoleucine 3–serine 23, lysine 51–alanine 71, aspartate 78–phenylalanine 98, alanine 115–phenylalanine 135, and leucine 140–proline 160.

Belongs to the PlsY family. Probably interacts with PlsX.

It is found in the cell inner membrane. It carries out the reaction an acyl phosphate + sn-glycerol 3-phosphate = a 1-acyl-sn-glycero-3-phosphate + phosphate. The protein operates within lipid metabolism; phospholipid metabolism. In terms of biological role, catalyzes the transfer of an acyl group from acyl-phosphate (acyl-PO(4)) to glycerol-3-phosphate (G3P) to form lysophosphatidic acid (LPA). This enzyme utilizes acyl-phosphate as fatty acyl donor, but not acyl-CoA or acyl-ACP. This chain is Glycerol-3-phosphate acyltransferase, found in Burkholderia cenocepacia (strain ATCC BAA-245 / DSM 16553 / LMG 16656 / NCTC 13227 / J2315 / CF5610) (Burkholderia cepacia (strain J2315)).